The chain runs to 241 residues: GTP cyclohydrolase 1 type 2 homolog (241 aa).

The a divalent metal cation site is built by H62, H63, D101, H207, and E211.

This sequence belongs to the GTP cyclohydrolase I type 2/NIF3 family. Homohexamer.

The polypeptide is GTP cyclohydrolase 1 type 2 homolog (Campylobacter jejuni subsp. jejuni serotype O:2 (strain ATCC 700819 / NCTC 11168)).